The sequence spans 139 residues: D-ribose pyranase (139 aa).

The active-site Proton donor is histidine 20. Substrate contacts are provided by residues aspartate 28, histidine 106, and 128-130; that span reads YAN.

Belongs to the RbsD / FucU family. RbsD subfamily. As to quaternary structure, homodecamer.

It is found in the cytoplasm. The enzyme catalyses beta-D-ribopyranose = beta-D-ribofuranose. Its pathway is carbohydrate metabolism; D-ribose degradation; D-ribose 5-phosphate from beta-D-ribopyranose: step 1/2. Its function is as follows. Catalyzes the interconversion of beta-pyran and beta-furan forms of D-ribose. The polypeptide is D-ribose pyranase (Proteus mirabilis (strain HI4320)).